Consider the following 345-residue polypeptide: Phosphoribosylformylglycinamidine cyclo-ligase (345 aa).

It belongs to the AIR synthase family.

Its subcellular location is the cytoplasm. The enzyme catalyses 2-formamido-N(1)-(5-O-phospho-beta-D-ribosyl)acetamidine + ATP = 5-amino-1-(5-phospho-beta-D-ribosyl)imidazole + ADP + phosphate + H(+). It participates in purine metabolism; IMP biosynthesis via de novo pathway; 5-amino-1-(5-phospho-D-ribosyl)imidazole from N(2)-formyl-N(1)-(5-phospho-D-ribosyl)glycinamide: step 2/2. In Shewanella baltica (strain OS223), this protein is Phosphoribosylformylglycinamidine cyclo-ligase.